Reading from the N-terminus, the 625-residue chain is Zinc finger protein 652-A (625 aa).

The tract at residues 80–255 (FFRDSKPINE…PSDKAKSEEK (176 aa)) is disordered. The span at 82-100 (RDSKPINEVHSVKGERENS) shows a compositional bias: basic and acidic residues. Residues 101–127 (GESEEEEDDDDDDDDEDDEEGEEDEDE) show a composition bias toward acidic residues. A compositionally biased stretch (basic and acidic residues) spans 150-166 (KGDKGVAQDSSHIKTSS). Residues 167–186 (DDEEGDSGEDDQDSHEDEEN) are compositionally biased toward acidic residues. A compositionally biased stretch (basic and acidic residues) spans 240 to 255 (PKEPKSPSDKAKSEEK). The C2H2-type 1 zinc finger occupies 258 to 281 (LTCDKCPRVFNTRWYLEKHMNVTH). Residues 285–307 (QICDKCGKKFVLESELSLHLQTD) form a C2H2-type 2; degenerate zinc finger. 6 C2H2-type zinc fingers span residues 312–335 (IQCI…KIVH), 342–364 (FSCE…LVAH), 370–392 (FTCE…SLQH), 398–420 (FRCE…MSIH), 426–448 (FMCQ…MKTH), and 454–476 (FICE…RRTH). The C2H2-type 9; degenerate zinc finger occupies 482 to 505 (YPCDVCGMRFRFSNMLKAHKEKCF).

Belongs to the krueppel C2H2-type zinc-finger protein family.

It localises to the nucleus. May be involved in transcriptional regulation. The polypeptide is Zinc finger protein 652-A (znf652-a) (Xenopus laevis (African clawed frog)).